The sequence spans 728 residues: Homoaconitase, mitochondrial (728 aa).

The transit peptide at 1–24 directs the protein to the mitochondrion; sequence MVAIPRLARLSVPAWALSARGRFY. Positions 362, 422, and 425 each coordinate [4Fe-4S] cluster.

The protein belongs to the aconitase/IPM isomerase family. [4Fe-4S] cluster serves as cofactor.

Its subcellular location is the mitochondrion. It carries out the reaction (2R,3S)-homoisocitrate = cis-homoaconitate + H2O. It functions in the pathway amino-acid biosynthesis; L-lysine biosynthesis via AAA pathway; L-alpha-aminoadipate from 2-oxoglutarate: step 3/5. Catalyzes the reversible hydration of cis-homoaconitate to (2R,3S)-homoisocitrate, a step in the alpha-aminoadipate pathway for lysine biosynthesis. This is Homoaconitase, mitochondrial (LYS4) from Cryptococcus neoformans var. neoformans serotype D (strain JEC21 / ATCC MYA-565) (Filobasidiella neoformans).